Here is a 333-residue protein sequence, read N- to C-terminus: 4-hydroxythreonine-4-phosphate dehydrogenase (333 aa).

Substrate is bound by residues histidine 136 and threonine 137. A divalent metal cation-binding residues include histidine 166, histidine 211, and histidine 266. Positions 274, 283, and 292 each coordinate substrate.

It belongs to the PdxA family. As to quaternary structure, homodimer. Zn(2+) is required as a cofactor. The cofactor is Mg(2+). Requires Co(2+) as cofactor.

It is found in the cytoplasm. The enzyme catalyses 4-(phosphooxy)-L-threonine + NAD(+) = 3-amino-2-oxopropyl phosphate + CO2 + NADH. Its pathway is cofactor biosynthesis; pyridoxine 5'-phosphate biosynthesis; pyridoxine 5'-phosphate from D-erythrose 4-phosphate: step 4/5. Functionally, catalyzes the NAD(P)-dependent oxidation of 4-(phosphooxy)-L-threonine (HTP) into 2-amino-3-oxo-4-(phosphooxy)butyric acid which spontaneously decarboxylates to form 3-amino-2-oxopropyl phosphate (AHAP). In Acidithiobacillus ferrooxidans (strain ATCC 23270 / DSM 14882 / CIP 104768 / NCIMB 8455) (Ferrobacillus ferrooxidans (strain ATCC 23270)), this protein is 4-hydroxythreonine-4-phosphate dehydrogenase.